Consider the following 453-residue polypeptide: Kynureninase (453 aa).

Pyridoxal 5'-phosphate is bound by residues L114, T115, 142–145, D232, H235, and Y257; that span reads FPSD. K258 carries the N6-(pyridoxal phosphate)lysine modification. W286 is a binding site for pyridoxal 5'-phosphate.

Belongs to the kynureninase family. As to quaternary structure, homodimer. Requires pyridoxal 5'-phosphate as cofactor.

The protein resides in the cytoplasm. The catalysed reaction is L-kynurenine + H2O = anthranilate + L-alanine + H(+). It catalyses the reaction 3-hydroxy-L-kynurenine + H2O = 3-hydroxyanthranilate + L-alanine + H(+). Its pathway is amino-acid degradation; L-kynurenine degradation; L-alanine and anthranilate from L-kynurenine: step 1/1. The protein operates within cofactor biosynthesis; NAD(+) biosynthesis; quinolinate from L-kynurenine: step 2/3. Catalyzes the cleavage of L-kynurenine (L-Kyn) and L-3-hydroxykynurenine (L-3OHKyn) into anthranilic acid (AA) and 3-hydroxyanthranilic acid (3-OHAA), respectively. The sequence is that of Kynureninase from Cryptococcus neoformans var. neoformans serotype D (strain JEC21 / ATCC MYA-565) (Filobasidiella neoformans).